Reading from the N-terminus, the 352-residue chain is DNA polymerase IV (352 aa).

Positions 4 to 185 (IIHVDMDCFF…LPLSKIPGVG (182 aa)) constitute a UmuC domain. 2 residues coordinate Mg(2+): aspartate 8 and aspartate 103. Glutamate 104 is a catalytic residue.

Belongs to the DNA polymerase type-Y family. In terms of assembly, monomer. It depends on Mg(2+) as a cofactor.

It is found in the cytoplasm. The catalysed reaction is DNA(n) + a 2'-deoxyribonucleoside 5'-triphosphate = DNA(n+1) + diphosphate. Its function is as follows. Poorly processive, error-prone DNA polymerase involved in untargeted mutagenesis. Copies undamaged DNA at stalled replication forks, which arise in vivo from mismatched or misaligned primer ends. These misaligned primers can be extended by PolIV. Exhibits no 3'-5' exonuclease (proofreading) activity. May be involved in translesional synthesis, in conjunction with the beta clamp from PolIII. This chain is DNA polymerase IV, found in Yersinia pestis bv. Antiqua (strain Antiqua).